A 507-amino-acid chain; its full sequence is ATP synthase subunit alpha, chloroplastic (507 aa).

170-177 provides a ligand contact to ATP; the sequence is GDRQTGKT.

The protein belongs to the ATPase alpha/beta chains family. As to quaternary structure, F-type ATPases have 2 components, CF(1) - the catalytic core - and CF(0) - the membrane proton channel. CF(1) has five subunits: alpha(3), beta(3), gamma(1), delta(1), epsilon(1). CF(0) has four main subunits: a, b, b' and c.

It is found in the plastid. Its subcellular location is the chloroplast thylakoid membrane. It catalyses the reaction ATP + H2O + 4 H(+)(in) = ADP + phosphate + 5 H(+)(out). Functionally, produces ATP from ADP in the presence of a proton gradient across the membrane. The alpha chain is a regulatory subunit. In Manihot esculenta (Cassava), this protein is ATP synthase subunit alpha, chloroplastic.